Reading from the N-terminus, the 185-residue chain is Translocon-associated protein subunit gamma (185 aa).

An N-acetylmethionine modification is found at methionine 1. At 1-27 (MAPKGSCKQQSEEDLLLQDFSRNLSAK) the chain is on the lumenal side. Serine 11 bears the Phosphoserine mark. A helical membrane pass occupies residues 28-48 (SSALFFGNAFIVSAIPIWLYW). Residues 49-54 (RIWHMD) lie on the Cytoplasmic side of the membrane. The helical transmembrane segment at 55 to 76 (LIQSAVLYSVMTLVSTYLVAFA) threads the bilayer. Topologically, residues 77 to 135 (YKNVKFVLKHKVAQKREDAVSKEVTRKLSEADNRKMSRKEKDERILWKKNEVADYEATT) are lumenal. Residue serine 105 is modified to Phosphoserine. Residues 136 to 157 (FSIFYNNTLFLVVVIVASFFIL) form a helical membrane-spanning segment. The Cytoplasmic portion of the chain corresponds to 158-163 (KNFNPT). Residues 164 to 184 (VNYILSISASSGLIALLSTGS) form a helical membrane-spanning segment.

Belongs to the TRAP-gamma family. In terms of assembly, heterotetramer of TRAP-alpha, TRAP-beta, TRAP-delta and TRAP-gamma.

The protein localises to the endoplasmic reticulum membrane. In terms of biological role, TRAP proteins are part of a complex whose function is to bind calcium to the ER membrane and thereby regulate the retention of ER resident proteins. This Pongo abelii (Sumatran orangutan) protein is Translocon-associated protein subunit gamma (SSR3).